A 335-amino-acid chain; its full sequence is Fructose-1,6-bisphosphatase class 1 (335 aa).

Residues Glu-93, Asp-117, Leu-119, and Asp-120 each contribute to the Mg(2+) site. Residues 120-123 (DGSS), Asn-213, Tyr-244, and Lys-274 each bind substrate. Mg(2+) is bound at residue Glu-280.

Belongs to the FBPase class 1 family. In terms of assembly, homotetramer. Mg(2+) serves as cofactor.

It is found in the cytoplasm. The catalysed reaction is beta-D-fructose 1,6-bisphosphate + H2O = beta-D-fructose 6-phosphate + phosphate. It functions in the pathway carbohydrate biosynthesis; gluconeogenesis. This chain is Fructose-1,6-bisphosphatase class 1, found in Flavobacterium psychrophilum (strain ATCC 49511 / DSM 21280 / CIP 103535 / JIP02/86).